Reading from the N-terminus, the 750-residue chain is Polyribonucleotide nucleotidyltransferase (750 aa).

Positions 489 and 495 each coordinate Mg(2+). Positions Pro556 to Ile620 constitute a KH domain. Residues Gly630–Lys701 enclose the S1 motif domain. A disordered region spans residues Lys697–Asp750. Residues Ala702 to Asp750 are compositionally biased toward basic and acidic residues.

It belongs to the polyribonucleotide nucleotidyltransferase family. The cofactor is Mg(2+).

The protein resides in the cytoplasm. The catalysed reaction is RNA(n+1) + phosphate = RNA(n) + a ribonucleoside 5'-diphosphate. Its function is as follows. Involved in mRNA degradation. Catalyzes the phosphorolysis of single-stranded polyribonucleotides processively in the 3'- to 5'-direction. The polypeptide is Polyribonucleotide nucleotidyltransferase (Christiangramia forsetii (strain DSM 17595 / CGMCC 1.15422 / KT0803) (Gramella forsetii)).